A 1058-amino-acid chain; its full sequence is Ubiquitin-like modifier-activating enzyme 1 (1058 aa).

The disordered stretch occupies residues methionine 1–serine 46. At serine 2 the chain carries N-acetylserine. Phosphoserine is present on residues serine 4, serine 13, serine 21, serine 24, and serine 46. The segment covering serine 24–valine 36 has biased composition (low complexity). Phosphotyrosine is present on tyrosine 55. Repeat copies occupy residues glycine 63–phenylalanine 199 and glycine 459–isoleucine 611. Positions glycine 63–isoleucine 611 are 2 approximate repeats. Residues alanine 478, aspartate 504, arginine 515, lysine 528, and aspartate 576 to asparagine 577 each bind ATP. At lysine 528 the chain carries N6-succinyllysine. The active-site Glycyl thioester intermediate is the cysteine 632. The residue at position 671 (lysine 671) is an N6-acetyllysine. A Phosphothreonine modification is found at threonine 800. Phosphoserine occurs at positions 810, 816, 820, and 835. Lysine 980 carries the post-translational modification N6-acetyllysine.

The protein belongs to the ubiquitin-activating E1 family. As to quaternary structure, monomer. Interacts with GAN (via BTB domain). In terms of processing, ISGylated.

It localises to the cytoplasm. Its subcellular location is the mitochondrion. The protein localises to the nucleus. It carries out the reaction ATP + ubiquitin + [E1 ubiquitin-activating enzyme]-L-cysteine = AMP + diphosphate + S-ubiquitinyl-[E1 ubiquitin-activating enzyme]-L-cysteine.. It functions in the pathway protein modification; protein ubiquitination. Functionally, catalyzes the first step in ubiquitin conjugation to mark cellular proteins for degradation through the ubiquitin-proteasome system. Activates ubiquitin by first adenylating its C-terminal glycine residue with ATP, and thereafter linking this residue to the side chain of a cysteine residue in E1, yielding a ubiquitin-E1 thioester and free AMP. Essential for the formation of radiation-induced foci, timely DNA repair and for response to replication stress. Promotes the recruitment of TP53BP1 and BRCA1 at DNA damage sites. The protein is Ubiquitin-like modifier-activating enzyme 1 of Rattus norvegicus (Rat).